We begin with the raw amino-acid sequence, 1048 residues long: PH and SEC7 domain-containing protein 3 (1048 aa).

A compositionally biased stretch (basic and acidic residues) spans 36-45 (SEGKAPDTSD). Positions 36–57 (SEGKAPDTSDHGGSTLLPPNVT) are disordered. Position 76 is a phosphoserine (Ser76). Disordered stretches follow at residues 104 to 126 (LDSV…LKEQ), 310 to 342 (GGDK…KVPR), 364 to 383 (SWKA…SPVR), and 395 to 434 (QENK…PGYT). Residues 311 to 321 (GDKRETQHPID) are compositionally biased toward basic and acidic residues. Residues 397 to 423 (NKQHLEKTPKPERDRERISEQEEHVKG) are compositionally biased toward basic and acidic residues. The region spanning 534-734 (TKGTPEIAFW…KALYNSIKNE (201 aa)) is the SEC7 domain. A compositionally biased stretch (basic and acidic residues) spans 741–758 (DDEEKKKSPSESTEEKAN). Residues 741-769 (DDEEKKKSPSESTEEKANGTHPKTISRIG) are disordered. A Phosphoserine modification is found at Ser770. The PH domain occupies 785–898 (AVYKSGFLAR…WINKINCVAA (114 aa)). The stretch at 922–952 (ATTTKLSQEEQLKSHESKLKQITTELAEHRS) forms a coiled coil. A disordered region spans residues 999 to 1048 (DESEAAGLKKSHSSPSLNPDTSPITAKVKRNVSERKDHRPETPSIKQKVT). 5 positions are modified to phosphoserine: Ser1009, Ser1011, Ser1012, Ser1014, and Ser1020. The segment covering 1011 to 1022 (SSPSLNPDTSPI) has biased composition (polar residues). Residues 1029 to 1039 (NVSERKDHRPE) show a composition bias toward basic and acidic residues.

In terms of tissue distribution, isoform 2 is expressed in epididymis (at protein level).

The protein localises to the cell membrane. The protein resides in the cell projection. It localises to the ruffle membrane. It is found in the postsynaptic density. Functionally, guanine nucleotide exchange factor for ARF6. This is PH and SEC7 domain-containing protein 3 (PSD3) from Homo sapiens (Human).